Reading from the N-terminus, the 241-residue chain is Large ribosomal subunit protein uL2 (241 aa).

Basic residues predominate over residues Met1–Arg12. 2 disordered regions span residues Met1 to Ser21 and Ala200 to Arg241.

Belongs to the universal ribosomal protein uL2 family. In terms of assembly, part of the 50S ribosomal subunit. Forms a bridge to the 30S subunit in the 70S ribosome.

One of the primary rRNA binding proteins. Required for association of the 30S and 50S subunits to form the 70S ribosome, for tRNA binding and peptide bond formation. It has been suggested to have peptidyltransferase activity; this is somewhat controversial. Makes several contacts with the 16S rRNA in the 70S ribosome. This is Large ribosomal subunit protein uL2 from Methanothermobacter thermautotrophicus (strain ATCC 29096 / DSM 1053 / JCM 10044 / NBRC 100330 / Delta H) (Methanobacterium thermoautotrophicum).